A 440-amino-acid polypeptide reads, in one-letter code: tRNA modification GTPase MnmE (440 aa).

(6S)-5-formyl-5,6,7,8-tetrahydrofolate is bound by residues arginine 23, glutamate 80, and lysine 120. Positions 217-366 (GLKIVIAGEP…LLAMLQAHLP (150 aa)) constitute a TrmE-type G domain. Asparagine 227 lines the K(+) pocket. GTP is bound by residues 227 to 232 (NAGKSS), 246 to 252 (TEIAGTT), and 271 to 274 (DTAG). Serine 231 contacts Mg(2+). K(+)-binding residues include threonine 246, isoleucine 248, and threonine 251. Position 252 (threonine 252) interacts with Mg(2+). Lysine 440 is a (6S)-5-formyl-5,6,7,8-tetrahydrofolate binding site.

It belongs to the TRAFAC class TrmE-Era-EngA-EngB-Septin-like GTPase superfamily. TrmE GTPase family. Homodimer. Heterotetramer of two MnmE and two MnmG subunits. K(+) serves as cofactor.

The protein resides in the cytoplasm. Its function is as follows. Exhibits a very high intrinsic GTPase hydrolysis rate. Involved in the addition of a carboxymethylaminomethyl (cmnm) group at the wobble position (U34) of certain tRNAs, forming tRNA-cmnm(5)s(2)U34. This is tRNA modification GTPase MnmE from Sinorhizobium medicae (strain WSM419) (Ensifer medicae).